Consider the following 312-residue polypeptide: Large ribosomal subunit protein uL15m (312 aa).

A disordered region spans residues 63-89; sequence RIRKGRGPSSGYGKTAGRGTKGQKAHG. The segment covering 70 to 82 has biased composition (gly residues); sequence PSSGYGKTAGRGT.

The protein belongs to the universal ribosomal protein uL15 family. As to quaternary structure, component of the mitochondrial large ribosomal subunit (mt-LSU). Mature N.crassa 74S mitochondrial ribosomes consist of a small (37S) and a large (54S) subunit. The 37S small subunit contains a 16S ribosomal RNA (16S mt-rRNA) and 32 different proteins. The 54S large subunit contains a 23S rRNA (23S mt-rRNA) and 42 different proteins.

Its subcellular location is the mitochondrion. Component of the mitochondrial ribosome (mitoribosome), a dedicated translation machinery responsible for the synthesis of mitochondrial genome-encoded proteins, including at least some of the essential transmembrane subunits of the mitochondrial respiratory chain. The mitoribosomes are attached to the mitochondrial inner membrane and translation products are cotranslationally integrated into the membrane. The protein is Large ribosomal subunit protein uL15m (mrpl10) of Neurospora crassa (strain ATCC 24698 / 74-OR23-1A / CBS 708.71 / DSM 1257 / FGSC 987).